A 301-amino-acid polypeptide reads, in one-letter code: Fluoroquinolones export ATP-binding protein Rv2688c (301 aa).

The ABC transporter domain occupies 18–246 (IRVRGLTFRY…RSRRRVRVEY (229 aa)). ATP is bound at residue 52–59 (GPSGAGKS).

The protein belongs to the ABC transporter superfamily. As to quaternary structure, the complex is composed of 2 ATP-binding proteins (Rv2688c) and 2 transmembrane proteins (Rv2686c and Rv2687c).

The protein resides in the cell membrane. With respect to regulation, inhibited by reserpine and verapamil. Part of the ABC transporter complex Rv2686c/Rv2687c/Rv2688c involved in fluoroquinolones export. Confers resistance to ciprofloxacin and, to a lesser extent, norfloxacin, moxifloxacin and sparfloxacin. Probably responsible for energy coupling to the transport system. In Mycobacterium tuberculosis (strain ATCC 25618 / H37Rv), this protein is Fluoroquinolones export ATP-binding protein Rv2688c.